The primary structure comprises 179 residues: Phospholipase A2 (179 aa).

An N-terminal signal peptide occupies residues 1–21; sequence MHALRSSVLALWLCLHVSVRA. The propeptide occupies 22-39; sequence WMTYRSANGLDEYEPEDR. Positions 47, 49, and 51 each coordinate Ca(2+). 5 cysteine pairs are disulfide-bonded: Cys48-Cys70, Cys69-Cys109, Cys76-Cys102, Cys100-Cys133, and Cys142-Cys150. The active site involves His73. Asp74 provides a ligand contact to Ca(2+). Residue Asp103 is part of the active site.

Belongs to the phospholipase A2 family. Group III subfamily. Requires Ca(2+) as cofactor. In terms of tissue distribution, expressed by the venom gland.

Its subcellular location is the secreted. It carries out the reaction a 1,2-diacyl-sn-glycero-3-phosphocholine + H2O = a 1-acyl-sn-glycero-3-phosphocholine + a fatty acid + H(+). Its function is as follows. May potentiate Xylotoxin(1)-Xa1a DRG activation and cell lysis, since the orthologous A.mellifera PA2 potentiates Xylotoxin(1)-Xa1a DRG activation and cell lysis. In vivo, intraplantar injection in mice may potentiate spontaneous pain behaviors and paw swelling caused by Xylotoxin(1)-Xa1a, since the orthologous A.mellifera PA2 shows this effect. PLA2 catalyzes the calcium-dependent hydrolysis of the 2-acyl groups in 3-sn-phosphoglycerides. The protein is Phospholipase A2 of Xylocopa aruana (Great carpenter bee).